The primary structure comprises 546 residues: Chaperonin GroEL (546 aa).

Residues 30–33 (TLGP), K51, 87–91 (DGTTT), G415, 479–481 (NAA), and D495 each bind ATP. The segment at 526–546 (KKDEPAMPAGGGMGGMGGMDF) is disordered. Over residues 534 to 546 (AGGGMGGMGGMDF) the composition is skewed to gly residues.

It belongs to the chaperonin (HSP60) family. As to quaternary structure, forms a cylinder of 14 subunits composed of two heptameric rings stacked back-to-back. Interacts with the co-chaperonin GroES.

The protein localises to the cytoplasm. It catalyses the reaction ATP + H2O + a folded polypeptide = ADP + phosphate + an unfolded polypeptide.. Together with its co-chaperonin GroES, plays an essential role in assisting protein folding. The GroEL-GroES system forms a nano-cage that allows encapsulation of the non-native substrate proteins and provides a physical environment optimized to promote and accelerate protein folding. The protein is Chaperonin GroEL of Xanthomonas campestris pv. campestris (strain 8004).